We begin with the raw amino-acid sequence, 468 residues long: MSVEKVLSLIQENEVKFVDLRFTDTKGKEQHISIPAHQIDADFFEEGKMFDGSSVAGWKGINESDMVMMPDASSAVLDPFTEDATLNIRCDILEPATMQGYDRDPRSIAKRAEDFMRSTGVADTVLIGPEPEFFLFDDVKFATDMSGSFFKIDDVEAAWNTGSDYEEGNKGHRPGVKGGYFPVAPVDSSQDIRSAMCLVMEEMGLVVEAHHHEATAGQNEIATRFNTLTTKADEIQIYKYVVHNVAHAFGKTATFMPKPLVGDNGSGMHVHQSLAKDGVNLFAGDKYGGLSEMALYYIGGIIKHARAINAFANPSTNSYKRLVPGFEAPVMLAYSARNRSASIRIPVVPSPKARRIEVRFGDPAANPYLCFASMLMAGLDGIKNKIHPGEAMDKDLYDLPAEESAEIPTVAYSLKDALAELDADREFLTAGGVFSDDFIDSYIELKSQDVERVNMTTHPVEFELYYSV.

A GS beta-grasp domain is found at 13–97 (NEVKFVDLRF…IRCDILEPAT (85 aa)). In terms of domain architecture, GS catalytic spans 105-468 (PRSIAKRAED…PVEFELYYSV (364 aa)). Mg(2+) contacts are provided by glutamate 130 and glutamate 132. Glutamate 208 provides a ligand contact to ATP. 2 residues coordinate Mg(2+): glutamate 213 and glutamate 220. L-glutamate-binding positions include 264–265 (NG) and glycine 265. Histidine 269 serves as a coordination point for Mg(2+). ATP contacts are provided by residues 271–273 (HQS) and serine 273. Residues arginine 321, glutamate 327, and arginine 339 each coordinate L-glutamate. ATP contacts are provided by arginine 339, arginine 344, and lysine 352. Glutamate 357 is a Mg(2+) binding site. Arginine 359 lines the L-glutamate pocket. An O-AMP-tyrosine modification is found at tyrosine 397.

This sequence belongs to the glutamine synthetase family. Oligomer of 12 subunits arranged in the form of two hexameric ring. It depends on Mg(2+) as a cofactor.

It is found in the cytoplasm. The catalysed reaction is L-glutamate + NH4(+) + ATP = L-glutamine + ADP + phosphate + H(+). Its activity is regulated as follows. The activity of this enzyme could be controlled by adenylation under conditions of abundant glutamine. Functionally, catalyzes the ATP-dependent biosynthesis of glutamine from glutamate and ammonia. This is Glutamine synthetase from Vibrio alginolyticus.